The following is a 207-amino-acid chain: Large ribosomal subunit protein uL4 (207 aa).

The disordered stretch occupies residues Gly47 to Ser77. Over residues Lys63–Ser77 the composition is skewed to basic residues.

The protein belongs to the universal ribosomal protein uL4 family. In terms of assembly, part of the 50S ribosomal subunit.

Functionally, one of the primary rRNA binding proteins, this protein initially binds near the 5'-end of the 23S rRNA. It is important during the early stages of 50S assembly. It makes multiple contacts with different domains of the 23S rRNA in the assembled 50S subunit and ribosome. Its function is as follows. Forms part of the polypeptide exit tunnel. The sequence is that of Large ribosomal subunit protein uL4 from Symbiobacterium thermophilum (strain DSM 24528 / JCM 14929 / IAM 14863 / T).